Consider the following 813-residue polypeptide: MAKELSQEEVLDFLCQSGGKVANASLLVHFKRFLRDPQAADAVLLKRRDKFKRYINSVAVVRQEGSVKYVVLRNRYQDLLGEDIEPAAAEDAGSEGERDQVVLPTEHGQDYLAHTFGQERLKQANGGDVICDCSEARAVVPSAAPHSHSQSWDVGESMSEKARVNPSHWDTKRYYPEDPPVPDSLPVSPPCTNTRQSSFTSTSRPHNHSLSSNNLSSSFSSPESPGLVAKPYNASPSPAGSSPNIREQTPKSQSLSKAANAAFVSVTCTDIKEQREGCTELLAPQPCQNWDYSQPEQLHSAQEHHSDLHREHMTNGFHSPDPLSSKYPHLTSPCTPLQLSPETDTTPDVPLAHNLAAVSYPSPPLPGNNMYGMWMCQIPVFKSIRCQLSLQDLDDFVDQETCGSEESDSGEGGDCDTEPRDNDDADDDTFSSDSHKEIPKLCVEQESEYLHKCHSNIDYSGKNDLYNSLLEEDRIGVKDTLVEHGDVASMRIDTSKSVYTAKSFLTDQAPILFELVRNAPPNKTSSCFQGALSSSDEELLDRDYRKRRRSSRYKKSANVSVPCVQPDTDRLLTAKCVSSSSFLINNNLQEQSTQAQFLPKYNSNFGLKKSASQKSSVVPLDPKEHDWIVKTAAGLWIQVYGMFSMDPHLALHKDFITGYTALHWFAKHGCIDLFNKVVIGAKKAGIELDMNVKSSNGYTPLHIAAIHGHHKVAIMLVEKLKVNVKVRDNSGKRAWQYLNSATSGDVWQLLGAPKGKTIFASCALHTAQNLNIRNKTSSQLARKSSLAAFRKTQHQRRKANNQSFLREREIYSD.

Disordered stretches follow at residues 142 to 256 (SAAP…QSLS) and 400 to 436 (ETCG…DSHK). The span at 158-176 (MSEKARVNPSHWDTKRYYP) shows a compositional bias: basic and acidic residues. Positions 177–189 (EDPPVPDSLPVSP) are enriched in pro residues. A compositionally biased stretch (polar residues) spans 191 to 202 (CTNTRQSSFTST). Over residues 208-244 (HSLSSNNLSSSFSSPESPGLVAKPYNASPSPAGSSPN) the composition is skewed to low complexity. A compositionally biased stretch (polar residues) spans 245–256 (IREQTPKSQSLS). The span at 400–416 (ETCGSEESDSGEGGDCD) shows a compositional bias: acidic residues. ANK repeat units lie at residues 657–686 (TGYT…KAGI) and 696–726 (NGYT…NVKV).

It belongs to the SOWAH family.

In Xenopus laevis (African clawed frog), this protein is Ankyrin repeat domain-containing protein SOWAHB (sowahb).